Reading from the N-terminus, the 155-residue chain is Ribosome maturation factor RimP (155 aa).

It belongs to the RimP family.

The protein resides in the cytoplasm. Functionally, required for maturation of 30S ribosomal subunits. The sequence is that of Ribosome maturation factor RimP from Prochlorococcus marinus (strain SARG / CCMP1375 / SS120).